A 180-amino-acid chain; its full sequence is Translation initiation factor IF-3 (180 aa).

It belongs to the IF-3 family. Monomer.

It localises to the cytoplasm. Its function is as follows. IF-3 binds to the 30S ribosomal subunit and shifts the equilibrium between 70S ribosomes and their 50S and 30S subunits in favor of the free subunits, thus enhancing the availability of 30S subunits on which protein synthesis initiation begins. This chain is Translation initiation factor IF-3, found in Xylella fastidiosa (strain 9a5c).